A 352-amino-acid polypeptide reads, in one-letter code: Peptide chain release factor 1 (352 aa).

N5-methylglutamine is present on Q233. Positions 288 to 309 (NAKDRKEQVGSGDRSERIRTYN) are disordered. The span at 289 to 306 (AKDRKEQVGSGDRSERIR) shows a compositional bias: basic and acidic residues.

The protein belongs to the prokaryotic/mitochondrial release factor family. In terms of processing, methylated by PrmC. Methylation increases the termination efficiency of RF1.

It is found in the cytoplasm. In terms of biological role, peptide chain release factor 1 directs the termination of translation in response to the peptide chain termination codons UAG and UAA. This Helicobacter pylori (strain Shi470) protein is Peptide chain release factor 1.